The sequence spans 396 residues: S-adenosylmethionine synthase (396 aa).

His-16 contributes to the ATP binding site. Asp-18 lines the Mg(2+) pocket. Glu-44 contacts K(+). L-methionine-binding residues include Glu-57 and Gln-100. A flexible loop region spans residues 100–110; the sequence is QSVDIAQGVDR. ATP-binding positions include 165–167, Asp-240, 246–247, Ala-263, and Lys-267; these read DAK and RK. Asp-240 lines the L-methionine pocket. Lys-271 is an L-methionine binding site.

The protein belongs to the AdoMet synthase family. As to quaternary structure, homotetramer; dimer of dimers. Mg(2+) is required as a cofactor. Requires K(+) as cofactor.

It localises to the cytoplasm. It catalyses the reaction L-methionine + ATP + H2O = S-adenosyl-L-methionine + phosphate + diphosphate. Its pathway is amino-acid biosynthesis; S-adenosyl-L-methionine biosynthesis; S-adenosyl-L-methionine from L-methionine: step 1/1. In terms of biological role, catalyzes the formation of S-adenosylmethionine (AdoMet) from methionine and ATP. The overall synthetic reaction is composed of two sequential steps, AdoMet formation and the subsequent tripolyphosphate hydrolysis which occurs prior to release of AdoMet from the enzyme. This Pseudomonas syringae pv. tomato (strain ATCC BAA-871 / DC3000) protein is S-adenosylmethionine synthase.